The chain runs to 96 residues: uncharacterized protein (96 aa).

The first 15 residues, 1–15 (MRLFILLVALFVICA), serve as a signal peptide directing secretion.

This is an uncharacterized protein from Caenorhabditis elegans.